Reading from the N-terminus, the 547-residue chain is Sodium-coupled neutral amino acid transporter 4 (547 aa).

Residues Met1–Gly104 are Extracellular-facing. Ser49 is subject to Phosphoserine. Residues Ile105–Leu125 traverse the membrane as a helical segment. The Cytoplasmic portion of the chain corresponds to Leu126–Lys151. Residues Ile152–Ile172 form a helical membrane-spanning segment. The Extracellular segment spans residues Ile173–Tyr195. A helical membrane pass occupies residues Leu196–Leu216. The Cytoplasmic segment spans residues Lys217–Gly220. The helical transmembrane segment at Tyr221 to Ile241 threads the bilayer. Over Tyr242–Thr332 the chain is Extracellular. Cys249 and Cys321 are joined by a disulfide. N-linked (GlcNAc...) asparagine glycosylation is found at Asn260, Asn264, and Asn276. The chain crosses the membrane as a helical span at residues Ala333–Tyr353. At Ser354–Asn369 the chain is on the cytoplasmic side. A helical membrane pass occupies residues Ile370–Phe390. Topologically, residues Tyr391–Ala411 are extracellular. Residues Leu412–Phe432 form a helical membrane-spanning segment. Topologically, residues Pro433–His453 are cytoplasmic. A helical membrane pass occupies residues Phe454–Ile474. Residues Lys475 to Tyr476 lie on the Extracellular side of the membrane. The helical transmembrane segment at Ile477 to Phe497 threads the bilayer. The Cytoplasmic portion of the chain corresponds to Tyr498–Gly514. A helical membrane pass occupies residues Ala515–Ile535. Residues Asp536–His547 lie on the Extracellular side of the membrane.

It belongs to the amino acid/polyamine transporter 2 family. The disulfide bond plays an important role in substrate transport, but has no effect on trafficking to the cell surface. Expressed predominantly in liver, and at lower level in skeletal muscle.

Its subcellular location is the cell membrane. The protein resides in the cell projection. It is found in the microvillus membrane. The enzyme catalyses L-alanine(in) + Na(+)(in) = L-alanine(out) + Na(+)(out). It carries out the reaction L-serine(in) + Na(+)(in) = L-serine(out) + Na(+)(out). It catalyses the reaction glycine(in) + Na(+)(in) = glycine(out) + Na(+)(out). The catalysed reaction is L-cysteine(in) + Na(+)(in) = L-cysteine(out) + Na(+)(out). The enzyme catalyses L-asparagine(in) + Na(+)(in) = L-asparagine(out) + Na(+)(out). It carries out the reaction L-threonine(in) + Na(+)(in) = L-threonine(out) + Na(+)(out). It catalyses the reaction L-proline(in) + Na(+)(in) = L-proline(out) + Na(+)(out). The catalysed reaction is L-methionine(in) + Na(+)(in) = L-methionine(out) + Na(+)(out). The enzyme catalyses L-glutamine(in) + Na(+)(in) = L-glutamine(out) + Na(+)(out). It carries out the reaction L-histidine(in) + Na(+)(in) = L-histidine(out) + Na(+)(out). Its function is as follows. Symporter that cotransports neutral amino acids and sodium ions from the extraccellular to the intracellular side of the cell membrane. The transport is electrogenic, pH dependent and partially tolerates substitution of Na(+) by Li(+). Preferentially transports smaller amino acids, such as glycine, L-alanine, L-serine, L-asparagine and L-threonine, followed by L-cysteine, L-histidine, L-proline and L-glutamine and L-methionine. This chain is Sodium-coupled neutral amino acid transporter 4, found in Rattus norvegicus (Rat).